A 780-amino-acid chain; its full sequence is ATP-dependent 6-phosphofructokinase, muscle type (780 aa).

Threonine 2 carries the N-acetylthreonine modification. The interval threonine 2–histidine 390 is N-terminal catalytic PFK domain 1. Residues glycine 25, arginine 88–cysteine 89, and glycine 118–serine 121 each bind ATP. Aspartate 119 contributes to the Mg(2+) binding site. Position 133 is a phosphoserine (serine 133). Residues serine 164–aspartate 166, arginine 201, methionine 208–arginine 210, glutamate 264, arginine 292, and histidine 298–arginine 301 contribute to the substrate site. Residue aspartate 166 is the Proton acceptor of the active site. Phosphoserine is present on serine 377. An interdomain linker region spans residues valine 391–histidine 401. A C-terminal regulatory PFK domain 2 region spans residues threonine 402 to valine 780. Beta-D-fructose 2,6-bisphosphate contacts are provided by residues arginine 471 and threonine 528 to asparagine 532. Serine 530 is a glycosylation site (O-linked (GlcNAc) serine). Lysine 557 is modified (N6-(2-hydroxyisobutyryl)lysine). Beta-D-fructose 2,6-bisphosphate is bound by residues arginine 566, methionine 573–glycine 575, glutamate 629, arginine 655, and histidine 661–glutamine 664. Serine 667 carries the phosphoserine modification. Position 735 (arginine 735) interacts with beta-D-fructose 2,6-bisphosphate. Serine 775 is modified (phosphoserine).

This sequence belongs to the phosphofructokinase type A (PFKA) family. ATP-dependent PFK group I subfamily. Eukaryotic two domain clade 'E' sub-subfamily. In terms of assembly, homo- and heterotetramers. Phosphofructokinase (PFK) enzyme functions as a tetramer composed of different combinations of 3 types of subunits, called PFKM (M), PFKL (L) and PFKP (P). The composition of the PFK tetramer differs according to the tissue type it is present in. The kinetic and regulatory properties of the tetrameric enzyme are dependent on the subunit composition, hence can vary across tissues. Interacts (via C-terminus) with HK1 (via N-terminal spermatogenic cell-specific region). Mg(2+) serves as cofactor. GlcNAcylation decreases enzyme activity.

It is found in the cytoplasm. The catalysed reaction is beta-D-fructose 6-phosphate + ATP = beta-D-fructose 1,6-bisphosphate + ADP + H(+). Its pathway is carbohydrate degradation; glycolysis; D-glyceraldehyde 3-phosphate and glycerone phosphate from D-glucose: step 3/4. Allosterically activated by ADP, AMP, or fructose 2,6-bisphosphate, and allosterically inhibited by ATP or citrate. Functionally, catalyzes the phosphorylation of D-fructose 6-phosphate to fructose 1,6-bisphosphate by ATP, the first committing step of glycolysis. This chain is ATP-dependent 6-phosphofructokinase, muscle type (PFKM), found in Pongo abelii (Sumatran orangutan).